An 83-amino-acid polypeptide reads, in one-letter code: Small ribosomal subunit protein bS16 (83 aa).

It belongs to the bacterial ribosomal protein bS16 family.

This Syntrophus aciditrophicus (strain SB) protein is Small ribosomal subunit protein bS16.